Here is a 286-residue protein sequence, read N- to C-terminus: Homeobox-leucine zipper protein ATHB-20 (286 aa).

A DNA-binding region (homeobox) is located at residues 84-143 (LGEKKKRLQLEQVKALEKSFELGNKLEPERKIQLAKALGMQPRQIAIWFQNRRARWKTRQ). The segment at 144-179 (LERDYDSLKKQFESLKSDNASLLAYNKKLLAEVMAL) is leucine-zipper.

The protein belongs to the HD-ZIP homeobox family. Class I subfamily. In terms of tissue distribution, widely expressed.

It localises to the nucleus. Probable transcription factor. The chain is Homeobox-leucine zipper protein ATHB-20 (ATHB-20) from Arabidopsis thaliana (Mouse-ear cress).